Here is a 306-residue protein sequence, read N- to C-terminus: Serrate RNA effector molecule homolog (306 aa).

Positions 1–28 (HKEEELLGSSGGPPPEEPPKEGNPAEIN) are disordered. At T101 the chain carries Phosphothreonine. S109 carries the post-translational modification Phosphoserine. A disordered region spans residues 251–284 (GPPYPHGPYGAGRGNYDAFRGQGGYPGKPRNRMV). Omega-N-methylarginine is present on residues R263, R270, and R280.

This sequence belongs to the ARS2 family. In terms of assembly, interacts with CASP8AP2, ERBB4, NCBP1/CBP80 and DROSHA. Interacts with LUZP4. Interacts with NCBP2/CBP20 and NCBP3.

The protein localises to the nucleus. Its subcellular location is the nucleoplasm. The protein resides in the cytoplasm. Acts as a mediator between the cap-binding complex (CBC) and the primary microRNAs (miRNAs) processing machinery during cell proliferation. Contributes to the stability and delivery of capped primary miRNA transcripts to the primary miRNA processing complex containing DGCR8 and DROSHA, thereby playing a role in RNA-mediated gene silencing (RNAi) by miRNAs. Binds capped RNAs (m7GpppG-capped RNA); however interaction is probably mediated via its interaction with NCBP1/CBP80 component of the CBC complex. Involved in cell cycle progression at S phase. Does not directly confer arsenite resistance but rather modulates arsenic sensitivity. Independently of its activity on miRNAs, necessary and sufficient to promote neural stem cell self-renewal. Does so by directly binding SOX2 promoter and positively regulating its transcription. In Cricetulus griseus (Chinese hamster), this protein is Serrate RNA effector molecule homolog (SRRT).